We begin with the raw amino-acid sequence, 875 residues long: Lysine-specific demethylase 7A (875 aa).

A PHD-type zinc finger spans residues 5–56; it reads PLYCVCRQPYDVNRFMIECDICKDWFHGSCVQVVEHHAADIDVYHCPNCEPI. The region spanning 197-353 is the JmjC domain; the sequence is FSDTRMSNLV…MQLRCYEMER (157 aa). Thr246 is a substrate binding site. The Fe cation site is built by His249 and Asp251. Residue Lys266 coordinates substrate. Residue His321 coordinates Fe cation. Disordered stretches follow at residues 442–506, 629–710, and 742–820; these read EDDS…SRKL, SQGE…NTDC, and QGNG…ATAK. A compositionally biased stretch (polar residues) spans 448 to 462; that stretch reads AVKTQGSAECSLSRS. Positions 478 to 505 are enriched in basic residues; the sequence is QDHHHHRRRHHHHHHHHHHHHHHHHSRK. Residues 650–663 are compositionally biased toward basic and acidic residues; that stretch reads SDSKAGDSAEKCSL. Basic residues predominate over residues 688 to 697; it reads SHRHSHHKQA. The span at 742-762 shows a compositional bias: low complexity; that stretch reads QGNGSSTSSSSDMWDSSEPCS.

The protein belongs to the JHDM1 histone demethylase family. JHDM1D subfamily. Requires Fe(2+) as cofactor. Predominantly expressed in brain.

The protein resides in the nucleus. In terms of biological role, histone demethylase required for brain development. Specifically demethylates dimethylated 'Lys-9' and 'Lys-27' (H3K9me2 and H3K27me2, respectively) of histone H3 and monomethylated histone H4 'Lys-20' residue (H4K20Me1), thereby playing a central role in histone code. This Danio rerio (Zebrafish) protein is Lysine-specific demethylase 7A (kdm7a).